Here is a 360-residue protein sequence, read N- to C-terminus: Protein RecA (360 aa).

65–72 (GPESSGKT) lines the ATP pocket.

Belongs to the RecA family.

It localises to the cytoplasm. In terms of biological role, can catalyze the hydrolysis of ATP in the presence of single-stranded DNA, the ATP-dependent uptake of single-stranded DNA by duplex DNA, and the ATP-dependent hybridization of homologous single-stranded DNAs. It interacts with LexA causing its activation and leading to its autocatalytic cleavage. This Tolumonas auensis (strain DSM 9187 / NBRC 110442 / TA 4) protein is Protein RecA.